The primary structure comprises 312 residues: Ribonuclease Z (312 aa).

Zn(2+) contacts are provided by histidine 62, histidine 64, aspartate 66, histidine 67, histidine 144, aspartate 215, and histidine 273. The active-site Proton acceptor is aspartate 66.

It belongs to the RNase Z family. As to quaternary structure, homodimer. The cofactor is Zn(2+).

It carries out the reaction Endonucleolytic cleavage of RNA, removing extra 3' nucleotides from tRNA precursor, generating 3' termini of tRNAs. A 3'-hydroxy group is left at the tRNA terminus and a 5'-phosphoryl group is left at the trailer molecule.. In terms of biological role, zinc phosphodiesterase, which displays some tRNA 3'-processing endonuclease activity. Probably involved in tRNA maturation, by removing a 3'-trailer from precursor tRNA. The polypeptide is Ribonuclease Z (Prochlorococcus marinus (strain MIT 9515)).